The sequence spans 501 residues: UPF0371 protein CD630_08980 (501 aa).

The protein belongs to the UPF0371 family.

The protein is UPF0371 protein CD630_08980 of Clostridioides difficile (strain 630) (Peptoclostridium difficile).